The sequence spans 535 residues: 4-hydroxy-3-methylbut-2-enyl diphosphate reductase, apicoplast (535 aa).

Residue Cys-231 participates in [4Fe-4S] cluster binding. (2E)-4-hydroxy-3-methylbut-2-enyl diphosphate-binding residues include His-260 and His-293. 2 residues coordinate dimethylallyl diphosphate: His-260 and His-293. Positions 260 and 293 each coordinate isopentenyl diphosphate. Cys-315 lines the [4Fe-4S] cluster pocket. His-343 serves as a coordination point for (2E)-4-hydroxy-3-methylbut-2-enyl diphosphate. Residue His-343 participates in dimethylallyl diphosphate binding. Position 343 (His-343) interacts with isopentenyl diphosphate. The active-site Proton donor is Glu-345. (2E)-4-hydroxy-3-methylbut-2-enyl diphosphate is bound at residue Thr-383. Cys-413 contacts [4Fe-4S] cluster. Residues Ser-441, Ser-442, Asn-443, and Ser-485 each coordinate (2E)-4-hydroxy-3-methylbut-2-enyl diphosphate. Residues Ser-441, Ser-442, Asn-443, and Ser-485 each coordinate dimethylallyl diphosphate. Isopentenyl diphosphate is bound by residues Ser-441, Ser-442, Asn-443, and Ser-485.

It belongs to the IspH family. In terms of assembly, interacts with Fd/ferredoxin. Requires [4Fe-4S] cluster as cofactor.

The protein resides in the plastid. The protein localises to the apicoplast. It catalyses the reaction dimethylallyl diphosphate + 2 oxidized [2Fe-2S]-[ferredoxin] + H2O = (2E)-4-hydroxy-3-methylbut-2-enyl diphosphate + 2 reduced [2Fe-2S]-[ferredoxin] + 2 H(+). The enzyme catalyses isopentenyl diphosphate + 2 oxidized [2Fe-2S]-[ferredoxin] + H2O = (2E)-4-hydroxy-3-methylbut-2-enyl diphosphate + 2 reduced [2Fe-2S]-[ferredoxin] + 2 H(+). It participates in isoprenoid biosynthesis; dimethylallyl diphosphate biosynthesis; dimethylallyl diphosphate from (2E)-4-hydroxy-3-methylbutenyl diphosphate: step 1/1. Its pathway is isoprenoid biosynthesis; isopentenyl diphosphate biosynthesis via DXP pathway; isopentenyl diphosphate from 1-deoxy-D-xylulose 5-phosphate: step 6/6. Its function is as follows. Catalyzes the conversion of 1-hydroxy-2-methyl-2-(E)-butenyl 4-diphosphate (HMBPP) into a mixture of isopentenyl diphosphate (IPP) and dimethylallyl diphosphate (DMAPP). Acts in the terminal step of the DOXP/MEP pathway for isoprenoid precursor biosynthesis. The protein is 4-hydroxy-3-methylbut-2-enyl diphosphate reductase, apicoplast of Plasmodium falciparum (isolate 3D7).